A 143-amino-acid chain; its full sequence is ATP synthase subunit b' (143 aa).

A helical transmembrane segment spans residues 6–26 (ATLPLMALQFLVLAVVLNAVF).

This sequence belongs to the ATPase B chain family. As to quaternary structure, F-type ATPases have 2 components, F(1) - the catalytic core - and F(0) - the membrane proton channel. F(1) has five subunits: alpha(3), beta(3), gamma(1), delta(1), epsilon(1). F(0) has four main subunits: a(1), b(1), b'(1) and c(10-14). The alpha and beta chains form an alternating ring which encloses part of the gamma chain. F(1) is attached to F(0) by a central stalk formed by the gamma and epsilon chains, while a peripheral stalk is formed by the delta, b and b' chains.

It is found in the cellular thylakoid membrane. F(1)F(0) ATP synthase produces ATP from ADP in the presence of a proton or sodium gradient. F-type ATPases consist of two structural domains, F(1) containing the extramembraneous catalytic core and F(0) containing the membrane proton channel, linked together by a central stalk and a peripheral stalk. During catalysis, ATP synthesis in the catalytic domain of F(1) is coupled via a rotary mechanism of the central stalk subunits to proton translocation. In terms of biological role, component of the F(0) channel, it forms part of the peripheral stalk, linking F(1) to F(0). The b'-subunit is a diverged and duplicated form of b found in plants and photosynthetic bacteria. This Gloeothece citriformis (strain PCC 7424) (Cyanothece sp. (strain PCC 7424)) protein is ATP synthase subunit b'.